A 461-amino-acid polypeptide reads, in one-letter code: Cysteine--tRNA ligase (461 aa).

Residue cysteine 29 participates in Zn(2+) binding. A 'HIGH' region motif is present at residues 31–41 (MTVYDFCHIGH). Positions 210, 235, and 239 each coordinate Zn(2+). Residues 267-271 (KMSKS) carry the 'KMSKS' region motif. Lysine 270 is an ATP binding site.

This sequence belongs to the class-I aminoacyl-tRNA synthetase family. As to quaternary structure, monomer. Zn(2+) is required as a cofactor.

It is found in the cytoplasm. The enzyme catalyses tRNA(Cys) + L-cysteine + ATP = L-cysteinyl-tRNA(Cys) + AMP + diphosphate. The polypeptide is Cysteine--tRNA ligase (Azotobacter vinelandii (strain DJ / ATCC BAA-1303)).